Reading from the N-terminus, the 357-residue chain is Chorismate synthase (357 aa).

Residue R48 participates in NADP(+) binding. FMN contacts are provided by residues 125-127 (RSS), 238-239 (NA), G282, 297-301 (KPTSS), and R323.

Belongs to the chorismate synthase family. Homotetramer. FMNH2 is required as a cofactor.

The enzyme catalyses 5-O-(1-carboxyvinyl)-3-phosphoshikimate = chorismate + phosphate. The protein operates within metabolic intermediate biosynthesis; chorismate biosynthesis; chorismate from D-erythrose 4-phosphate and phosphoenolpyruvate: step 7/7. Catalyzes the anti-1,4-elimination of the C-3 phosphate and the C-6 proR hydrogen from 5-enolpyruvylshikimate-3-phosphate (EPSP) to yield chorismate, which is the branch point compound that serves as the starting substrate for the three terminal pathways of aromatic amino acid biosynthesis. This reaction introduces a second double bond into the aromatic ring system. This is Chorismate synthase from Gluconacetobacter diazotrophicus (strain ATCC 49037 / DSM 5601 / CCUG 37298 / CIP 103539 / LMG 7603 / PAl5).